We begin with the raw amino-acid sequence, 117 residues long: Large ribosomal subunit protein bL20 (117 aa).

Belongs to the bacterial ribosomal protein bL20 family.

In terms of biological role, binds directly to 23S ribosomal RNA and is necessary for the in vitro assembly process of the 50S ribosomal subunit. It is not involved in the protein synthesizing functions of that subunit. In Rippkaea orientalis (strain PCC 8801 / RF-1) (Cyanothece sp. (strain PCC 8801)), this protein is Large ribosomal subunit protein bL20.